The chain runs to 467 residues: Ribosome biogenesis protein YTM1 (467 aa).

A ubiquitin-like (UBL) domain region spans residues 8 to 95 (IKIKFFTNEE…ETFLSLEYTR (88 aa)). Residues 105–467 (SFNNEDWISS…QINKGSDISK (363 aa)) are sufficient for interaction with ERB1 and association with 66S pre-ribosomes. WD repeat units lie at residues 120–159 (KTLP…EKQY), 161–199 (GHSG…GSIP), 216–255 (GHKA…MTTI), 293–333 (SHTQ…CIDT), 335–374 (STGY…NTTE), 382–422 (GHTN…SLYT), and 432–467 (KGAD…DISK).

This sequence belongs to the WD repeat WDR12/YTM1 family. In terms of assembly, component of the NOP7 complex, composed of ERB1, NOP7 and YTM1. The complex is held together by ERB1, which interacts with NOP7 via its N-terminal domain and with YTM1 via a high-affinity interaction between the seven-bladed beta-propeller domains of the 2 proteins. The NOP7 complex associates with the 66S pre-ribosome. Interacts (via UBL domain) with MDN1 (via VWFA/MIDAS domain).

It is found in the nucleus. The protein resides in the nucleolus. The protein localises to the nucleoplasm. In terms of biological role, component of the NOP7 complex, which is required for maturation of the 25S and 5.8S ribosomal RNAs and formation of the 60S ribosome. The protein is Ribosome biogenesis protein YTM1 of Scheffersomyces stipitis (strain ATCC 58785 / CBS 6054 / NBRC 10063 / NRRL Y-11545) (Yeast).